The primary structure comprises 286 residues: Merozoite surface protein 2 (286 aa).

The N-terminal stretch at 1–20 is a signal peptide; the sequence is MKVIKTLSIINFFIFVTFNI. N22 and N36 each carry an N-linked (GlcNAc...) asparagine glycan. A disordered region spans residues 43-248; it reads MTESKTPTPT…SQKECTDGNK (206 aa). The interval 44-212 is polymorphic region; that stretch reads TESKTPTPTG…EQTESPELQS (169 aa). Residues 54–68 are compositionally biased toward gly residues; that stretch reads AGAGASGSAGSGDGA. Copy 1 of the repeat occupies 59-68; sequence SGSAGSGDGA. The 5 X 10 AA tandem repeats of S-G-S-A-[GS]-[GS]-[AD]-G-A stretch occupies residues 59-106; it reads SGSAGSGDGASGSASGSASGSASGSAGASGSASGSAGASGSASGSAGA. A 2; partial repeat occupies 69–76; that stretch reads SGSASGSA. Low complexity predominate over residues 69–137; sequence SGSASGSASG…STSTSSENPN (69 aa). A run of 3 repeats spans residues 77-86, 88-96, and 97-106. Composition is skewed to polar residues over residues 153-179 and 186-214; these read KPNQ…NVPP and KSPT…QSAP. N163 is a glycosylation site (N-linked (GlcNAc...) asparagine). Residue N235 is glycosylated (N-linked (GlcNAc...) asparagine). Over residues 239-248 the composition is skewed to basic and acidic residues; it reads SQKECTDGNK. A disulfide bridge links C243 with C251. N-linked (GlcNAc...) asparagine glycosylation is found at N259 and N260. N260 carries GPI-anchor amidated asparagine lipidation. Positions 261–286 are cleaved as a propeptide — removed in mature form; sequence SSNIASINKFVVLISATLVLSFAIFI.

The protein resides in the cell membrane. May play a role in the merozoite attachment to the erythrocyte. In Plasmodium falciparum (isolate 311), this protein is Merozoite surface protein 2.